The primary structure comprises 154 residues: Decarboxylase claH (154 aa).

It belongs to the tpcK family.

It catalyses the reaction atrochrysone carboxylate + H(+) = atrochrysone + CO2. It functions in the pathway pigment biosynthesis. Its function is as follows. Decarboxylase involved in the biosynthesis of the bianthraquinone cladofulvin, a conidial pigment not required for virulence but that plays a role in fitness and resistance to environmental stresses including UV light and low-temperature stress. The pathway begins with the synthesis of atrochrysone thioester by the polyketide synthase (PKS) claG. The atrochrysone carboxyl ACP thioesterase claF then breaks the thioester bond and releases the atrochrysone carboxylic acid from claG. This compound is decarboxylated by claH to yield emodin, which is further converted to chrysophanol hydroquinone by the reductase claC and the dehydratase claB. The cytochrome monooxygenase P450 claM then catalyzes the dimerization of nataloe-emodin to cladofulvin. This is Decarboxylase claH from Passalora fulva (Tomato leaf mold).